Here is a 609-residue protein sequence, read N- to C-terminus: Forkhead box protein O (609 aa).

Disordered regions lie at residues 1–89 and 181–263; these read MDGF…KNSS and KSVR…SSCG. The residue at position 43 (threonine 43) is a Phosphothreonine; by PKB/AKT1. Residues 62–79 are compositionally biased toward polar residues; the sequence is TKASNQQLASGDPQQAMQ. Residues 80 to 89 show a composition bias toward low complexity; that stretch reads NANAAKKNSS. Positions 94–200 form a DNA-binding region, fork-head; it reads WGNLSYADLI…ETSRYEKRRG (107 aa). Serine 189 bears the Phosphoserine; by PKB/AKT1 mark. Polar residues-rich tracts occupy residues 220–229 and 254–263; these read ATPSPSSSVS and RASSNASSCG. The residue at position 257 (serine 257) is a Phosphoserine; by PKB/AKT1. Serine 260, serine 261, and serine 266 each carry phosphoserine. Disordered regions lie at residues 321–365 and 384–411; these read AASG…QGQG and RDGL…DSLN. Pro residues predominate over residues 327 to 339; the sequence is TQPPPPYQPPQQP. Polar residues predominate over residues 388–397; sequence SPNSVTTTMS.

As to quaternary structure, interacts with melt.

The protein localises to the cytoplasm. Its subcellular location is the nucleus. Its function is as follows. Transcription factor involved in the regulation of the insulin signaling pathway. Consistently activates both the downstream target Thor\d4EBP and the feedback control target InR. Involved in negative regulation of the cell cycle, modulating cell growth and proliferation. In response to cellular stresses, such as nutrient deprivation or increased levels of reactive oxygen species, foxo is activated and inhibits growth through the action of target genes such as Thor. Foxo activated in the adult fat body can regulate lifespan in adults; an insulin peptide itself may function as one secondary messenger of insulin-regulated aging. Also regulates Lip4, homolog of human acid lipases, thereby acting as a key modulator of lipid metabolism by insulin signaling and integrates insulin responses to glucose and lipid homeostasis. The protein is Forkhead box protein O of Drosophila virilis (Fruit fly).